The chain runs to 237 residues: NAD-dependent protein deacetylase (237 aa).

The region spanning 1-237 is the Deacetylase sirtuin-type domain; sequence MFTTSLRQAQ…LVETNRALQK (237 aa). Residues A18, T22, F29, R30, Q95, D98, and H113 each contribute to the NAD(+) site. F29 contributes to the nicotinamide binding site. D98 contacts nicotinamide. The active-site Proton acceptor is H113. 4 residues coordinate Zn(2+): C121, C124, C140, and C142. NAD(+) contacts are provided by S180, S181, N205, and I224.

It belongs to the sirtuin family. Class U subfamily. The cofactor is Zn(2+).

The protein resides in the cytoplasm. The enzyme catalyses N(6)-acetyl-L-lysyl-[protein] + NAD(+) + H2O = 2''-O-acetyl-ADP-D-ribose + nicotinamide + L-lysyl-[protein]. Functionally, NAD-dependent protein deacetylase which modulates the activities of several enzymes which are inactive in their acetylated form. This Shouchella clausii (strain KSM-K16) (Alkalihalobacillus clausii) protein is NAD-dependent protein deacetylase.